The primary structure comprises 382 residues: Lipid-A-disaccharide synthase (382 aa).

It belongs to the LpxB family.

It carries out the reaction 2-N,3-O-bis[(3R)-3-hydroxytetradecanoyl]-alpha-D-glucosaminyl 1-phosphate + UDP-2-N,3-O-bis[(3R)-3-hydroxytetradecanoyl]-alpha-D-glucosamine = lipid A disaccharide (E. coli) + UDP + H(+). The catalysed reaction is a lipid X + a UDP-2-N,3-O-bis[(3R)-3-hydroxyacyl]-alpha-D-glucosamine = a lipid A disaccharide + UDP + H(+). It functions in the pathway glycolipid biosynthesis; lipid IV(A) biosynthesis; lipid IV(A) from (3R)-3-hydroxytetradecanoyl-[acyl-carrier-protein] and UDP-N-acetyl-alpha-D-glucosamine: step 5/6. In terms of biological role, condensation of UDP-2,3-diacylglucosamine and 2,3-diacylglucosamine-1-phosphate to form lipid A disaccharide, a precursor of lipid A, a phosphorylated glycolipid that anchors the lipopolysaccharide to the outer membrane of the cell. This chain is Lipid-A-disaccharide synthase, found in Escherichia fergusonii (strain ATCC 35469 / DSM 13698 / CCUG 18766 / IAM 14443 / JCM 21226 / LMG 7866 / NBRC 102419 / NCTC 12128 / CDC 0568-73).